The sequence spans 321 residues: Glucokinase (321 aa).

Ala-9–Thr-14 lines the ATP pocket.

Belongs to the bacterial glucokinase family.

It is found in the cytoplasm. The enzyme catalyses D-glucose + ATP = D-glucose 6-phosphate + ADP + H(+). The chain is Glucokinase from Saccharophagus degradans (strain 2-40 / ATCC 43961 / DSM 17024).